We begin with the raw amino-acid sequence, 449 residues long: MSPAGEHGTAAPIEILPVAGLPEFRPGDDLGAAVAKAAPWLRDGDVVVVTSKAVSKCEGRLVPAPADPEERDRLRRKLVDEEAVRVLARKGRTLITENRHGLVQAAAGVDGSNVGRDELALLPLDPDASAAALRARLRELLGVEVAVLVTDTMGRAWRNGQTDAAVGAAGLAVLHGYSGAVDQHGNELLVTEVAIADEIAAAADLVKGKLTAMPVAVVRGLSVTDDGSTARQLLRPGTEDLFWLGTAEAIELGRRQAQLLRRSVRRFSAEPVPAELVREAVAEALTAPAPHHTRPVRFVWLQTPAVRTRLLDAMKDKWRADLAGDGRPAESIERRVARGQILYDAPEVVIPMLVPDGAHSYPDAARTDAEHTMFTVAVGAAVQALLVGLAVRGLGSCWIGSTIFAADLVRAVLGLPADWEPLGAIAIGYAAEPAGPRDPADPGDLLIRK.

The tract at residues 1 to 245 is coenzyme F420:L-glutamate ligase; the sequence is MSPAGEHGTA…PGTEDLFWLG (245 aa). GTP is bound by residues 21–24, Ser51, and Lys56; that span reads LPEF. Asp110 contributes to the a divalent metal cation binding site. Asn113 is a GTP binding site. Residues Asp151 and Thr152 each contribute to the a divalent metal cation site. Positions 246-449 are dehydro-coenzyme F420-0 reductase; that stretch reads TAEAIELGRR…ADPGDLLIRK (204 aa). Residues 261–265 and Ala289 each bind FMN; that span reads RRSVR. Asp321 is a coenzyme F420-(gamma-Glu)n binding site. The FMN site is built by Gly400 and Arg437.

In the N-terminal section; belongs to the CofE family. It depends on Mg(2+) as a cofactor. Mn(2+) is required as a cofactor. K(+) serves as cofactor.

It carries out the reaction oxidized coenzyme F420-0 + GTP + L-glutamate = oxidized coenzyme F420-1 + GDP + phosphate + H(+). The catalysed reaction is oxidized coenzyme F420-1 + GTP + L-glutamate = oxidized coenzyme F420-2 + GDP + phosphate + H(+). It catalyses the reaction oxidized coenzyme F420-(gamma-L-Glu)(n) + GTP + L-glutamate = oxidized coenzyme F420-(gamma-L-Glu)(n+1) + GDP + phosphate + H(+). The enzyme catalyses oxidized coenzyme F420-0 + FMN + H(+) = dehydro coenzyme F420-0 + FMNH2. It functions in the pathway cofactor biosynthesis; coenzyme F420 biosynthesis. Its function is as follows. Bifunctional enzyme that catalyzes the GTP-dependent successive addition of multiple gamma-linked L-glutamates to the L-lactyl phosphodiester of 7,8-didemethyl-8-hydroxy-5-deazariboflavin (F420-0) to form polyglutamated F420 derivatives, and the FMNH2-dependent reduction of dehydro-F420-0 to form F420-0. This is Bifunctional F420 biosynthesis protein FbiB from Mycobacterium avium (strain 104).